Reading from the N-terminus, the 372-residue chain is N-methyl-L-tryptophan oxidase (372 aa).

4–34 (DLIIIGSGSVGAAAGYYATRAGLKVLMTDAH) provides a ligand contact to FAD. S-8alpha-FAD cysteine is present on cysteine 307.

Belongs to the MSOX/MTOX family. MTOX subfamily. As to quaternary structure, monomer. FAD is required as a cofactor.

It catalyses the reaction N(alpha)-methyl-L-tryptophan + O2 + H2O = L-tryptophan + formaldehyde + H2O2. In terms of biological role, catalyzes the oxidative demethylation of N-methyl-L-tryptophan. The sequence is that of N-methyl-L-tryptophan oxidase from Salmonella dublin (strain CT_02021853).